The primary structure comprises 347 residues: MLIKQGDRLINTRNWSELVKPEQITRDSDPADAMYGKFVCEPLERGYGTTIGNALRRVLLSSLQGAAFVSVKVSGVQHEFTTIPGVLEDVTDIVLNLKQVRLAMDTDEPQFLELSVNKKGAVKAGDIKTNQHVMVLNPDLHIATLTEDLELTFEFEVRMGKGYVPADMHEGLSEEIGLIKLDSSFAPVRKVAYTVEQARVGQMTNYDKLIIEVWTDGSVTPEDAIAYSAKIIKDQISVFINFDERISGESSGNSSGSSDVNENLFKGIDELELSVRATNCLKSANITLVGELVQKSENEMLKTKNFGRKSLDEIKRVLCDMSLDFGMKVDGFEKKYQEWKRKQQNEA.

The segment at 1 to 243 is alpha N-terminal domain (alpha-NTD); sequence MLIKQGDRLI…DQISVFINFD (243 aa). The alpha C-terminal domain (alpha-CTD) stretch occupies residues 260-347; that stretch reads VNENLFKGID…EWKRKQQNEA (88 aa).

It belongs to the RNA polymerase alpha chain family. In terms of assembly, homodimer. The RNAP catalytic core consists of 2 alpha, 1 beta, 1 beta' and 1 omega subunit. When a sigma factor is associated with the core the holoenzyme is formed, which can initiate transcription.

It catalyses the reaction RNA(n) + a ribonucleoside 5'-triphosphate = RNA(n+1) + diphosphate. Functionally, DNA-dependent RNA polymerase catalyzes the transcription of DNA into RNA using the four ribonucleoside triphosphates as substrates. This chain is DNA-directed RNA polymerase subunit alpha, found in Nitratidesulfovibrio vulgaris (strain DSM 19637 / Miyazaki F) (Desulfovibrio vulgaris).